Reading from the N-terminus, the 549-residue chain is Chaperonin GroEL (549 aa).

Residues 29 to 32, Lys-50, 86 to 90, Gly-413, 479 to 481, and Asp-496 contribute to the ATP site; these read TLGP, DGTTT, and NAA. The disordered stretch occupies residues 522 to 549; sequence VSDKPEKPQQGGQGGGGMGGGDMGGMDF. The segment covering 532–549 has biased composition (gly residues); the sequence is GGQGGGGMGGGDMGGMDF.

Belongs to the chaperonin (HSP60) family. In terms of assembly, forms a cylinder of 14 subunits composed of two heptameric rings stacked back-to-back. Interacts with the co-chaperonin GroES.

Its subcellular location is the cytoplasm. The enzyme catalyses ATP + H2O + a folded polypeptide = ADP + phosphate + an unfolded polypeptide.. Its function is as follows. Together with its co-chaperonin GroES, plays an essential role in assisting protein folding. The GroEL-GroES system forms a nano-cage that allows encapsulation of the non-native substrate proteins and provides a physical environment optimized to promote and accelerate protein folding. The polypeptide is Chaperonin GroEL (Deinococcus deserti (strain DSM 17065 / CIP 109153 / LMG 22923 / VCD115)).